Here is a 193-residue protein sequence, read N- to C-terminus: Peptidyl-tRNA hydrolase (193 aa).

Y17 is a tRNA binding site. The Proton acceptor role is filled by H22. TRNA-binding residues include Y68, N70, and N116.

It belongs to the PTH family. Monomer.

It is found in the cytoplasm. It carries out the reaction an N-acyl-L-alpha-aminoacyl-tRNA + H2O = an N-acyl-L-amino acid + a tRNA + H(+). In terms of biological role, hydrolyzes ribosome-free peptidyl-tRNAs (with 1 or more amino acids incorporated), which drop off the ribosome during protein synthesis, or as a result of ribosome stalling. Functionally, catalyzes the release of premature peptidyl moieties from peptidyl-tRNA molecules trapped in stalled 50S ribosomal subunits, and thus maintains levels of free tRNAs and 50S ribosomes. The polypeptide is Peptidyl-tRNA hydrolase (Chromobacterium violaceum (strain ATCC 12472 / DSM 30191 / JCM 1249 / CCUG 213 / NBRC 12614 / NCIMB 9131 / NCTC 9757 / MK)).